A 656-amino-acid chain; its full sequence is MTDYYEPTLLFRQNALRRYCPSLSPISSVETLSSSILTNENIKGNVSSWMFNSANPKDTEVLNQSCSLNRMNIKSNYWKIPDTNMNLTAMAITDTHTDNPLFSVSSANNESNLFIYELDLLGNYLTHHNTISLPNINGMKWLPNSNRHLVTGNSKGYAHLVSIPEVNRTGNEDSEEQSAEICKRFNHRKHIKSKQDINKHSTISKLDFMNNDNSSLLSIYNNNLFYWDMNDAEAQRRPTPISISSISGLANFDPLPTHNANLVGICGKFGVSLFDLRQPKFTVPPSILEYASKKKLGANQMRWNPNNENVFAAAHRDGVVRLWDIRKQDNFANLSGHTDKISSLEWNDGDLFSGSRDGNIVHWDLTSDLSANNQFMNCGLKEGLDSVHFNPHMNRLERAINERQCGTVLPASNTNIISMCSVTGSDNSKDDMKVLSIDGSSFFGVHSKIFDAVNISMTSDKLYYTESDIQLMMKSENSNNTLVGSTDSINEQVTAPLAITRKSTLKDFAQAADAARPSNLSKDTLLGSVEDLKLAPEPIVVDDDDLKITKEIEDDLEDYNDFTFAPPSFIPIQNGNVSTCSHELDSEEDSGISSVESSPLKREASFKFQLLDSLDFEEKKLPRDDSFNTEMFNDLRMARQASVRTIGTHYRNVYNG.

WD repeat units lie at residues 131–171, 198–237, 291–333, and 336–373; these read ISLP…RTGN, NKHSTISKLDFMNNDNSSLLSIYNNNLFYWDMNDAEAQRR, ASKK…NFAN, and GHTDKISSLEWNDGDLFSGSRDGNIVHWDLTSDLSANN.

It belongs to the WD repeat DSE1 family.

In terms of biological role, involved in cell wall metabolism and required for the separation of the mother and daughter cells. In Scheffersomyces stipitis (strain ATCC 58785 / CBS 6054 / NBRC 10063 / NRRL Y-11545) (Yeast), this protein is Protein DSE1 (DSE1).